Reading from the N-terminus, the 154-residue chain is Fibroblast growth factor 2 (154 aa).

A propeptide spanning residues 1–9 is cleaved from the precursor; the sequence is MAASGITSL. Residue Asn35 participates in heparin binding. At Tyr81 the chain carries Phosphotyrosine; by TEC. Lys94 participates in a covalent cross-link: Glycyl lysine isopeptide (Lys-Gly) (interchain with G-Cter in SUMO1). Residues 127 to 143 form a heparin-binding region; sequence KRTGQYKLGSKTGPGQK.

This sequence belongs to the heparin-binding growth factors family. In terms of assembly, monomer. Homodimer. Interacts with FGFR1, FGFR2, FGFR3 and FGFR4. Affinity between fibroblast growth factors (FGFs) and their receptors is increased by heparan sulfate glycosaminoglycans that function as coreceptors. Interacts with CSPG4, FGFBP1 and TEC. Found in a complex with FGFBP1, FGF1 and FGF2. Interacts with FGFBP3. Interacts with integrin ITGAV:ITGB3; the interaction is required for FGF2 signaling. Interacts with SNORC (via the extracellular domain). Interacts with glypican GPC3. Phosphorylation at Tyr-81 regulates FGF2 unconventional secretion.

The protein resides in the secreted. The protein localises to the nucleus. Functionally, acts as a ligand for FGFR1, FGFR2, FGFR3 and FGFR4. Also acts as an integrin ligand which is required for FGF2 signaling. Binds to integrin ITGAV:ITGB3. Plays an important role in the regulation of cell survival, cell division, cell differentiation and cell migration. Functions as a potent mitogen in vitro. Can induce angiogenesis. Mediates phosphorylation of ERK1/2 and thereby promotes retinal lens fiber differentiation. The protein is Fibroblast growth factor 2 (Fgf2) of Mus musculus (Mouse).